The following is a 359-amino-acid chain: Phosphate acyltransferase (359 aa).

Residues Ala338–Ala359 are disordered.

This sequence belongs to the PlsX family. As to quaternary structure, homodimer. Probably interacts with PlsY.

Its subcellular location is the cytoplasm. The enzyme catalyses a fatty acyl-[ACP] + phosphate = an acyl phosphate + holo-[ACP]. The protein operates within lipid metabolism; phospholipid metabolism. Functionally, catalyzes the reversible formation of acyl-phosphate (acyl-PO(4)) from acyl-[acyl-carrier-protein] (acyl-ACP). This enzyme utilizes acyl-ACP as fatty acyl donor, but not acyl-CoA. This Cupriavidus taiwanensis (strain DSM 17343 / BCRC 17206 / CCUG 44338 / CIP 107171 / LMG 19424 / R1) (Ralstonia taiwanensis (strain LMG 19424)) protein is Phosphate acyltransferase.